We begin with the raw amino-acid sequence, 268 residues long: 5'-nucleotidase SurE (268 aa).

Positions 24, 25, 55, and 111 each coordinate a divalent metal cation.

It belongs to the SurE nucleotidase family. A divalent metal cation serves as cofactor.

The protein resides in the cytoplasm. It catalyses the reaction a ribonucleoside 5'-phosphate + H2O = a ribonucleoside + phosphate. Functionally, nucleotidase that shows phosphatase activity on nucleoside 5'-monophosphates. In Deinococcus radiodurans (strain ATCC 13939 / DSM 20539 / JCM 16871 / CCUG 27074 / LMG 4051 / NBRC 15346 / NCIMB 9279 / VKM B-1422 / R1), this protein is 5'-nucleotidase SurE.